The sequence spans 761 residues: Zinc finger protein 711 (761 aa).

Glycyl lysine isopeptide (Lys-Gly) (interchain with G-Cter in SUMO2) cross-links involve residues Lys-224, Lys-235, and Lys-296. C2H2-type zinc fingers lie at residues 383–408, 414–436, 476–499, 505–527, and 533–556; these read YPCH…HPDH, YQCT…LESH, HKCK…LAVH, HVCV…MRTH, and YQCQ…KSKH. The C2H2-type 6; atypical zinc finger occupies 562–584; the sequence is YKCEHCPQAFGDERELQRHLDLF. Cys-564, Cys-567, and His-580 together coordinate Zn(2+). 6 consecutive C2H2-type zinc fingers follow at residues 590–613, 619–641, 647–670, 676–698, 704–727, and 733–755; these read HQCP…ISVH, HKCE…SDIH, HQCR…LSVH, LKCK…MKTH, YQCE…ISIH, and HRCE…IMRH.

The protein belongs to the krueppel C2H2-type zinc-finger protein family. Interacts with PHF8.

The protein resides in the nucleus. In terms of biological role, transcription regulator required for brain development. Probably acts as a transcription factor that binds to the promoter of target genes and recruits PHF8 histone demethylase, leading to activated expression of genes involved in neuron development, such as KDM5C. May compete with transcription factor ARX for activation of expression of KDM5C. The chain is Zinc finger protein 711 (Znf711) from Mus musculus (Mouse).